Reading from the N-terminus, the 430-residue chain is Ribosomal protein uS12 methylthiotransferase RimO (430 aa).

Residues methionine 1–proline 116 form the MTTase N-terminal domain. [4Fe-4S] cluster-binding residues include cysteine 10, cysteine 46, cysteine 79, cysteine 146, cysteine 150, and cysteine 153. Residues serine 132–glutamate 362 enclose the Radical SAM core domain. A TRAM domain is found at lysine 365 to isoleucine 430.

Belongs to the methylthiotransferase family. RimO subfamily. It depends on [4Fe-4S] cluster as a cofactor.

Its subcellular location is the cytoplasm. The catalysed reaction is L-aspartate(89)-[ribosomal protein uS12]-hydrogen + (sulfur carrier)-SH + AH2 + 2 S-adenosyl-L-methionine = 3-methylsulfanyl-L-aspartate(89)-[ribosomal protein uS12]-hydrogen + (sulfur carrier)-H + 5'-deoxyadenosine + L-methionine + A + S-adenosyl-L-homocysteine + 2 H(+). Catalyzes the methylthiolation of an aspartic acid residue of ribosomal protein uS12. This is Ribosomal protein uS12 methylthiotransferase RimO from Pseudothermotoga lettingae (strain ATCC BAA-301 / DSM 14385 / NBRC 107922 / TMO) (Thermotoga lettingae).